Consider the following 314-residue polypeptide: MAPPQVLAFGLLLAAATAAVAAAQQGCVCENYKLTTNCSLNALGQCQCTSIGAQNSVICSKLASKCLVMKAEMTGSKAGRRLKPENAIQNNDGLYDPDCDENGLFKAKQCNGTSMCWCVNTAGVRRTDKDSEISCLERVRTYWIIIELKHKTREKPYDVTSLQNALKEVITDRYQLDPKYITNILYENDIITIDLVQNSSQKTLNEVDIADVAYYFEKDVKDESLFHSKRMDLRVNGELLDLDPGQTSIYYVDEKPPEFSMQGLQAGIIAVIAVVAIAIVAGIIVLIVSTKKRRAKYEKAEIKEMGEMHRELNA.

The first 23 residues, 1–23 (MAPPQVLAFGLLLAAATAAVAAA), serve as a signal peptide directing secretion. The Extracellular segment spans residues 24–265 (QQGCVCENYK…PPEFSMQGLQ (242 aa)). Cystine bridges form between Cys-27–Cys-46, Cys-29–Cys-59, Cys-38–Cys-48, Cys-66–Cys-99, Cys-110–Cys-116, and Cys-118–Cys-135. A glycan (N-linked (GlcNAc...) asparagine) is linked at Asn-37. Residues 63-135 (ASKCLVMKAE…RTDKDSEISC (73 aa)) form the Thyroglobulin type-1 domain. An N-linked (GlcNAc...) asparagine glycan is attached at Asn-111. Asn-198 carries an N-linked (GlcNAc...) asparagine glycan. The chain crosses the membrane as a helical span at residues 266 to 288 (AGIIAVIAVVAIAIVAGIIVLIV). Residues 289–314 (STKKRRAKYEKAEIKEMGEMHRELNA) are Cytoplasmic-facing.

It belongs to the EPCAM family. Monomer. Interacts with phosphorylated CLDN7. Post-translationally, glycosylation at Asn-198 is crucial for protein stability.

The protein localises to the lateral cell membrane. It localises to the cell junction. Its subcellular location is the tight junction. Its function is as follows. May act as a physical homophilic interaction molecule between intestinal epithelial cells (IECs) and intraepithelial lymphocytes (IELs) at the mucosal epithelium for providing immunological barrier as a first line of defense against mucosal infection. Plays a role in embryonic stem cells proliferation and differentiation. Up-regulates the expression of FABP5, MYC and cyclins A and E. In Sus scrofa (Pig), this protein is Epithelial cell adhesion molecule (TACSTD1).